The primary structure comprises 209 residues: D-aminoacyl-tRNA deacylase 1 (209 aa).

A Gly-cisPro motif, important for rejection of L-amino acids motif is present at residues 139-140 (GP). The disordered stretch occupies residues 142–209 (TIELESPAPG…EGDVSSEREP (68 aa)). Basic and acidic residues-rich tracts occupy residues 159–170 (QLSKLEKQQQRK) and 181–194 (SSKERNAPRKEDRS). 3 positions are modified to phosphoserine: S197, S204, and S205.

The protein belongs to the DTD family. In terms of assembly, homodimer. Interacts with CDC45 and TOPBP1. Preferentially phosphorylated in cells arrested early in S phase. Phosphorylation in the C-terminus weakens the interaction with CDC45.

It localises to the nucleus. The protein localises to the cytoplasm. It catalyses the reaction glycyl-tRNA(Ala) + H2O = tRNA(Ala) + glycine + H(+). The catalysed reaction is a D-aminoacyl-tRNA + H2O = a tRNA + a D-alpha-amino acid + H(+). Its function is as follows. An aminoacyl-tRNA editing enzyme that deacylates mischarged D-aminoacyl-tRNAs. Also deacylates mischarged glycyl-tRNA(Ala), protecting cells against glycine mischarging by AlaRS. Acts via tRNA-based rather than protein-based catalysis; rejects L-amino acids rather than detecting D-amino acids in the active site. By recycling D-aminoacyl-tRNA to D-amino acids and free tRNA molecules, this enzyme counteracts the toxicity associated with the formation of D-aminoacyl-tRNA entities in vivo and helps enforce protein L-homochirality. ATPase involved in DNA replication, may facilitate loading of CDC45 onto pre-replication complexes. The polypeptide is D-aminoacyl-tRNA deacylase 1 (Dtd1) (Mus musculus (Mouse)).